A 423-amino-acid polypeptide reads, in one-letter code: Dihydroorotase-like protein (423 aa).

Belongs to the metallo-dependent hydrolases superfamily. DHOase family. PyrC' subfamily. As to quaternary structure, heterododecamer of 6 active PyrB subunits and 6 non-catalytic PyrC' subunits.

Its function is as follows. Non-functional DHOase. This Pseudomonas aeruginosa (strain ATCC 15692 / DSM 22644 / CIP 104116 / JCM 14847 / LMG 12228 / 1C / PRS 101 / PAO1) protein is Dihydroorotase-like protein (pyrC').